The following is a 132-amino-acid chain: Small ribosomal subunit protein uS8 (132 aa).

The protein belongs to the universal ribosomal protein uS8 family. In terms of assembly, part of the 30S ribosomal subunit. Contacts proteins S5 and S12.

Functionally, one of the primary rRNA binding proteins, it binds directly to 16S rRNA central domain where it helps coordinate assembly of the platform of the 30S subunit. The chain is Small ribosomal subunit protein uS8 from Corynebacterium efficiens (strain DSM 44549 / YS-314 / AJ 12310 / JCM 11189 / NBRC 100395).